An 89-amino-acid chain; its full sequence is Small ribosomal subunit protein uS15 (89 aa).

It belongs to the universal ribosomal protein uS15 family. Part of the 30S ribosomal subunit. Forms a bridge to the 50S subunit in the 70S ribosome, contacting the 23S rRNA.

Its function is as follows. One of the primary rRNA binding proteins, it binds directly to 16S rRNA where it helps nucleate assembly of the platform of the 30S subunit by binding and bridging several RNA helices of the 16S rRNA. Forms an intersubunit bridge (bridge B4) with the 23S rRNA of the 50S subunit in the ribosome. This is Small ribosomal subunit protein uS15 from Mesorhizobium japonicum (strain LMG 29417 / CECT 9101 / MAFF 303099) (Mesorhizobium loti (strain MAFF 303099)).